Reading from the N-terminus, the 105-residue chain is Small ribosomal subunit protein uS10 (105 aa).

This sequence belongs to the universal ribosomal protein uS10 family. As to quaternary structure, part of the 30S ribosomal subunit.

In terms of biological role, involved in the binding of tRNA to the ribosomes. The protein is Small ribosomal subunit protein uS10 of Desulfovibrio desulfuricans (strain ATCC 27774 / DSM 6949 / MB).